A 687-amino-acid chain; its full sequence is MKLAYWMYAGPAHIGVLRVSSSFKNVHAIMHAPLGDDYFNVMRSMLERERDFTPVTASIVDRHVLARGSQEKVVENITRKNKEETPDLILLTPTCTSSILQEDLHNFVESALAKPVQIDEHADHKVTQQSALSSVSPLLPLEENTLIVSELDKKLSPSSKLHINMPNICIPEGEGEGEQTKNSIFVKSATLTNLSEEELLNQEHHTKTRNHSDVILADVNHYRVNELQAADRTLEQIVRYYISQAQKQNCLNITKTAKPSVNIIGIFTLGFHNQHDCRELKRLFNDLGIQINEIIPEGGNVHNLKKLPQAWFNFVPYREIGLMTAMYLKSEFNMPYVAITPMGLIDTAACIRSICKIITTQLLNQTATVQEPSKFIYPKATSLEQTNILETSQKETILKDNPDSGNTLSTTVEEIETLFNKYIDQQTRFVSQAAWFSRSIDCQNLTGKKAVVFGDATHSAAMTKLLAREMGIKVSCAGTYCKHDADWFREQVSGFCDQVLITDDHTQVGDMIAQLEPAAIFGTQMERHVGKRLDIPCGVISAPVHIQNFPLGYRPFLGYEGTNQIADLVYNSFNLGMEDHLLQIFGGHDSENNSSIATHLNTNNAINLAPGYLPEGEGSSRTSNVVSTISSEKKAIVWSPEGLAELNKVPGFVRGKVKRNTEKYALQKNCSMITVEVMYAAKEALSA.

Asp36 is a [4Fe-4S] cluster binding site. Residue Asp441 is the Proton donor of the active site. 576 to 577 (GM) provides a ligand contact to substrate.

The protein belongs to the ChlB/BchB/BchZ family. In terms of assembly, protochlorophyllide reductase is composed of three subunits; ChlL, ChlN and ChlB. Forms a heterotetramer of two ChlB and two ChlN subunits. [4Fe-4S] cluster serves as cofactor.

Its subcellular location is the plastid. The protein localises to the chloroplast. The enzyme catalyses chlorophyllide a + oxidized 2[4Fe-4S]-[ferredoxin] + 2 ADP + 2 phosphate = protochlorophyllide a + reduced 2[4Fe-4S]-[ferredoxin] + 2 ATP + 2 H2O. It participates in porphyrin-containing compound metabolism; chlorophyll biosynthesis (light-independent). Component of the dark-operative protochlorophyllide reductase (DPOR) that uses Mg-ATP and reduced ferredoxin to reduce ring D of protochlorophyllide (Pchlide) to form chlorophyllide a (Chlide). This reaction is light-independent. The NB-protein (ChlN-ChlB) is the catalytic component of the complex. The chain is Light-independent protochlorophyllide reductase subunit B from Chlamydomonas reinhardtii (Chlamydomonas smithii).